Reading from the N-terminus, the 382-residue chain is 3-ketosteroid-9-alpha-monooxygenase, oxygenase component (382 aa).

The region spanning 20–122 (WHCLGLSRTF…TMEKHGQLFV (103 aa)) is the Rieske domain. C61, H63, C80, and H83 together coordinate [2Fe-2S] cluster. Residues N169, H175, H180, and D298 each coordinate Fe cation.

As to quaternary structure, homotrimer. The two-component system 3-ketosteroid-9-alpha-monooxygenase is composed of an oxygenase component KshA and a reductase component KshB. [2Fe-2S] cluster serves as cofactor. The cofactor is Fe cation.

The catalysed reaction is androsta-1,4-diene-3,17-dione + 2 reduced [2Fe-2S]-[ferredoxin] + O2 + 2 H(+) = 9alpha-hydroxyandrosta-1,4-diene-3,17-dione + 2 oxidized [2Fe-2S]-[ferredoxin] + H2O. Functionally, in vitro, catalyzes the introduction of a 9alpha-hydroxyl moiety into the ring B of 3-ketosteroid substrates such as 1,4-androstadiene-3,17-dione (ADD), 4-androstene-3,17-dione (AD), 4-androstene-17beta-ol-3-one (testosterone), 4-pregnene-3,20-dione (progesterone), 23,24-bisnorcholesta-4-ene-22-oate and 23,24-bisnorcholesta-1,4-diene-22-oate. The sequence is that of 3-ketosteroid-9-alpha-monooxygenase, oxygenase component from Rhodococcus rhodochrous.